Here is a 295-residue protein sequence, read N- to C-terminus: UDP-N-acetylenolpyruvoylglucosamine reductase (295 aa).

An FAD-binding PCMH-type domain is found at V26–S189. Residue R169 is part of the active site. The Proton donor role is filled by C218. The active site involves E288.

It belongs to the MurB family. Requires FAD as cofactor.

It is found in the cytoplasm. It carries out the reaction UDP-N-acetyl-alpha-D-muramate + NADP(+) = UDP-N-acetyl-3-O-(1-carboxyvinyl)-alpha-D-glucosamine + NADPH + H(+). The protein operates within cell wall biogenesis; peptidoglycan biosynthesis. Its function is as follows. Cell wall formation. This is UDP-N-acetylenolpyruvoylglucosamine reductase from Wolbachia sp. subsp. Brugia malayi (strain TRS).